The following is a 533-amino-acid chain: Phospho-2-dehydro-3-deoxyheptonate aldolase 1, chloroplastic (533 aa).

A chloroplast-targeting transit peptide spans 1–57 (MALSTNSTTSSLLPKTPLVQQPLLKNASLPTTTKAIRFIQPISAIHSSDSSKNTPIV). Polar residues predominate over residues 47–56 (SSDSSKNTPI). Positions 47 to 70 (SSDSSKNTPIVSAKPSSPPAATST) are disordered. The segment covering 57–70 (VSAKPSSPPAATST) has biased composition (low complexity). C145 provides a ligand contact to Mn(2+). Residues R184, 343 to 344 (ER), K366, and R397 each bind substrate. Residues H429, E471, and D501 each contribute to the Mn(2+) site.

Belongs to the class-II DAHP synthase family. As to quaternary structure, homodimer. Requires Mn(2+) as cofactor. Mostly expressed in flowers, especially in petal limbs and tubes, and, to a lower extent, in roots, stems, stigmas, anthers, leaves and sepals.

It localises to the plastid. The protein localises to the chloroplast. It catalyses the reaction D-erythrose 4-phosphate + phosphoenolpyruvate + H2O = 7-phospho-2-dehydro-3-deoxy-D-arabino-heptonate + phosphate. It participates in metabolic intermediate biosynthesis; chorismate biosynthesis; chorismate from D-erythrose 4-phosphate and phosphoenolpyruvate: step 1/7. In terms of biological role, involved in the production of volatile organic compounds (VOCs), including floral volatile benzenoids and phenylpropanoids (FVBP), in flowers of fragrant cultivars (e.g. cv. Mitchell and cv. V26), scent attracting pollinators (e.g. the night-active hawkmoth pollinator Manduca sexta). Catalyzes an aldol-like condensation reaction between phosphoenolpyruvate (PEP) and D-erythrose 4-phosphate (E4P) to generate 3-deoxy-D-arabino-heptulosonate 7-phosphate (DAH7P) and inorganic phosphate. This Petunia hybrida (Petunia) protein is Phospho-2-dehydro-3-deoxyheptonate aldolase 1, chloroplastic.